The primary structure comprises 478 residues: SPbeta prophage-derived uncharacterized protein YonD (478 aa).

The stretch at 326–419 (IQSQLNQKDE…KFSTEEVQNL (94 aa)) forms a coiled coil.

This chain is SPbeta prophage-derived uncharacterized protein YonD (yonD), found in Bacillus subtilis (strain 168).